The chain runs to 317 residues: Peroxisome biogenesis protein 7 (317 aa).

WD repeat units lie at residues 58 to 98 (DTAD…PSNP), 104 to 144 (EHAR…SVRT), 147 to 187 (EHAY…STMI), 190 to 230 (AHDF…VPLA), 234 to 274 (GHGY…ALVG), and 278 to 317 (HHTE…PRAS).

It belongs to the WD repeat peroxin-7 family. As to quaternary structure, interacts with PEX5; interaction only takes place when PEX7 is associated with cargo proteins. Interacts with PEX13 (via N-terminus) and PEX12 (via C-terminus), but not with PEX14. As to expression, expressed in siliques and leaves, but barely detectable in flowers, stems and roots.

Its subcellular location is the cytoplasm. It is found in the cytosol. The protein resides in the peroxisome matrix. Its function is as follows. Receptor required for the peroxisomal import of proteins containing a C-terminal PTS2-type peroxisomal targeting signal. Specifically binds to cargo proteins containing a PTS2 peroxisomal targeting signal in the cytosol. Cargo protein-binding triggers interaction with PEX5 and formation of a ternary complex composed of PEX5 and PEX7 along with PTS2-containing cargo proteins, which is tranlocated into peroxisomes by passing through the PEX13-PEX14 docking complex. The protein is Peroxisome biogenesis protein 7 (PEX7) of Arabidopsis thaliana (Mouse-ear cress).